A 372-amino-acid polypeptide reads, in one-letter code: Phospho-N-acetylmuramoyl-pentapeptide-transferase (372 aa).

A run of 10 helical transmembrane segments spans residues 2 to 22 (LVWLFSWLGHYYAPFYAVSSL), 71 to 91 (TPTMGGVLILSAIGVSTLLWA), 98 to 118 (VWILLIVMIIFGAVGWADDWL), 134 to 154 (YFWLSMGALFVGISLYYIATL), 176 to 196 (MIPFSAVPFGIGFIIFTYFVI), 211 to 231 (GLAILPVVLVAAGLGAMAYVS), 251 to 271 (VIIVCGAMIGAGLGFLWFNAH), 275 to 295 (VFMGDVGALSLGAMLGTIAVM), 300 to 320 (IAFAIMGGLFVAEALSVMLQV), and 349 to 369 (QVVARFWIIAIILVILGLMTL).

It belongs to the glycosyltransferase 4 family. MraY subfamily. Mg(2+) serves as cofactor.

The protein localises to the cell inner membrane. It catalyses the reaction UDP-N-acetyl-alpha-D-muramoyl-L-alanyl-gamma-D-glutamyl-meso-2,6-diaminopimeloyl-D-alanyl-D-alanine + di-trans,octa-cis-undecaprenyl phosphate = di-trans,octa-cis-undecaprenyl diphospho-N-acetyl-alpha-D-muramoyl-L-alanyl-D-glutamyl-meso-2,6-diaminopimeloyl-D-alanyl-D-alanine + UMP. Its pathway is cell wall biogenesis; peptidoglycan biosynthesis. Functionally, catalyzes the initial step of the lipid cycle reactions in the biosynthesis of the cell wall peptidoglycan: transfers peptidoglycan precursor phospho-MurNAc-pentapeptide from UDP-MurNAc-pentapeptide onto the lipid carrier undecaprenyl phosphate, yielding undecaprenyl-pyrophosphoryl-MurNAc-pentapeptide, known as lipid I. This Psychrobacter cryohalolentis (strain ATCC BAA-1226 / DSM 17306 / VKM B-2378 / K5) protein is Phospho-N-acetylmuramoyl-pentapeptide-transferase.